The following is a 91-amino-acid chain: DNA-directed RNA polymerase subunit omega (91 aa).

It belongs to the RNA polymerase subunit omega family. As to quaternary structure, the RNAP catalytic core consists of 2 alpha, 1 beta, 1 beta' and 1 omega subunit. When a sigma factor is associated with the core the holoenzyme is formed, which can initiate transcription.

The catalysed reaction is RNA(n) + a ribonucleoside 5'-triphosphate = RNA(n+1) + diphosphate. Functionally, promotes RNA polymerase assembly. Latches the N- and C-terminal regions of the beta' subunit thereby facilitating its interaction with the beta and alpha subunits. The chain is DNA-directed RNA polymerase subunit omega from Actinobacillus pleuropneumoniae serotype 5b (strain L20).